The following is a 352-amino-acid chain: UDP-N-acetylglucosamine--N-acetylmuramyl-(pentapeptide) pyrophosphoryl-undecaprenol N-acetylglucosamine transferase 3 (352 aa).

UDP-N-acetyl-alpha-D-glucosamine is bound by residues 11–13 (SAG), arginine 164, serine 194, and glutamine 289.

The protein belongs to the glycosyltransferase 28 family. MurG subfamily.

Its subcellular location is the cell membrane. It carries out the reaction di-trans,octa-cis-undecaprenyl diphospho-N-acetyl-alpha-D-muramoyl-L-alanyl-D-glutamyl-meso-2,6-diaminopimeloyl-D-alanyl-D-alanine + UDP-N-acetyl-alpha-D-glucosamine = di-trans,octa-cis-undecaprenyl diphospho-[N-acetyl-alpha-D-glucosaminyl-(1-&gt;4)]-N-acetyl-alpha-D-muramoyl-L-alanyl-D-glutamyl-meso-2,6-diaminopimeloyl-D-alanyl-D-alanine + UDP + H(+). It functions in the pathway cell wall biogenesis; peptidoglycan biosynthesis. Its function is as follows. Cell wall formation. Catalyzes the transfer of a GlcNAc subunit on undecaprenyl-pyrophosphoryl-MurNAc-pentapeptide (lipid intermediate I) to form undecaprenyl-pyrophosphoryl-MurNAc-(pentapeptide)GlcNAc (lipid intermediate II). This chain is UDP-N-acetylglucosamine--N-acetylmuramyl-(pentapeptide) pyrophosphoryl-undecaprenol N-acetylglucosamine transferase 3, found in Bacillus thuringiensis (strain Al Hakam).